A 188-amino-acid polypeptide reads, in one-letter code: Ribosome maturation factor RimM (188 aa).

The region spanning 96 to 169 (DDEFYYADLE…RILIDPMAAG (74 aa)) is the PRC barrel domain.

Belongs to the RimM family. Binds ribosomal protein uS19.

The protein resides in the cytoplasm. An accessory protein needed during the final step in the assembly of 30S ribosomal subunit, possibly for assembly of the head region. Essential for efficient processing of 16S rRNA. May be needed both before and after RbfA during the maturation of 16S rRNA. It has affinity for free ribosomal 30S subunits but not for 70S ribosomes. The sequence is that of Ribosome maturation factor RimM from Agrobacterium fabrum (strain C58 / ATCC 33970) (Agrobacterium tumefaciens (strain C58)).